A 1173-amino-acid chain; its full sequence is PR domain zinc finger protein 10 (1173 aa).

The interval 146-211 (RLPPMEGADS…AEPPRPFDPN (66 aa)) is disordered. Polar residues predominate over residues 154–167 (DSSTTINSLPSPNA). Positions 172–202 (KEDDDDDDDDDDDEEEEDDDGEDSDLDDWEA) are enriched in acidic residues. One can recognise an SET domain in the interval 248–366 (LPLVLYIDRF…PKQELKVWYA (119 aa)). The segment at 267–371 (IPKRTQFGPL…KVWYAASYAE (105 aa)) is N-terminal PR domain; essential for transcriptional activator activity. The segment at 395–417 (WPCYECNRRFMSSEQLQQHLNSH) adopts a C2H2-type 1 zinc-finger fold. Residues 430–447 (RGRTRTRRKFGPGRRPGR) are compositionally biased toward basic residues. Residues 430-451 (RGRTRTRRKFGPGRRPGRPPKF) are disordered. 9 consecutive C2H2-type zinc fingers follow at residues 559 to 581 (FKCL…LRFH), 589 to 611 (LTCD…MKFH), 617 to 639 (YSCI…VVVH), 645 to 668 (FSCP…RSFH), 673 to 695 (YQCT…MLRH), 701 to 724 (FLCS…QRMH), 756 to 779 (FKCR…SKRH), 801 to 824 (YYCQ…LKNH), and 863 to 886 (VCCP…RKKH). Residues 926 to 1153 (QAMTELSQTL…PASNSSQTTQ (228 aa)) are C-terminal glutamine-rich region; essential for transcriptional activator activity. Disordered stretches follow at residues 1014–1056 (PTSG…ANSA) and 1125–1173 (KKSS…ISKP). Over residues 1150 to 1160 (QTTQYIITTTT) the composition is skewed to low complexity. Residues 1161–1173 (NMNGSSEVHISKP) show a composition bias toward polar residues.

Belongs to the class V-like SAM-binding methyltransferase superfamily.

The protein localises to the nucleus. Transcriptional activator, essential for early embryonic development and survival of embryonic stem cells (ESCs). Supports cell growth and survival during early development by transcriptionally activating the expression of the translation initiation factor EIF3B, to sustain global translation. Activates the transcription of FLNC. The polypeptide is PR domain zinc finger protein 10 (prdm10) (Xenopus tropicalis (Western clawed frog)).